A 228-amino-acid chain; its full sequence is Cytidylate kinase (228 aa).

Residue 17–25 participates in ATP binding; the sequence is GPTASGKGT.

The protein belongs to the cytidylate kinase family. Type 1 subfamily.

The protein localises to the cytoplasm. The catalysed reaction is CMP + ATP = CDP + ADP. The enzyme catalyses dCMP + ATP = dCDP + ADP. The polypeptide is Cytidylate kinase (Burkholderia ambifaria (strain MC40-6)).